Reading from the N-terminus, the 122-residue chain is Large ribosomal subunit protein uL14c (122 aa).

It belongs to the universal ribosomal protein uL14 family. In terms of assembly, part of the 50S ribosomal subunit.

Its subcellular location is the plastid. The protein localises to the chloroplast. In terms of biological role, binds to 23S rRNA. This Cycas taitungensis (Prince sago) protein is Large ribosomal subunit protein uL14c.